The following is a 177-amino-acid chain: Parathyroid hormone-related protein (177 aa).

Residues 1 to 24 form the signal peptide; it reads MLRRLVQQWGVAVFLLSYSVPSCG. Residues 25–34 constitute a propeptide that is removed on maturation; the sequence is RSVEELGRRL. The segment at 57–68 is important for receptor binding; sequence RFFLHHLIAEIH. Positions 74–177 are disordered; it reads ATSEVSPNSK…TSLELNLRRH (104 aa). Over residues 76–90 the composition is skewed to polar residues; sequence SEVSPNSKPAPNTKN. The Nuclear localization signal motif lies at 108-129; it reads TNKVETYKEQPLKTPGKKKKGK. A compositionally biased stretch (basic and acidic residues) spans 109–118; that stretch reads NKVETYKEQP. A compositionally biased stretch (basic residues) spans 122–132; the sequence is PGKKKKGKPGK.

It belongs to the parathyroid hormone family. As to quaternary structure, PTHrP interacts with PTH1R (via N-terminal extracellular domain). In terms of processing, there are several secretory forms, including osteostatin, arising from endoproteolytic cleavage of the initial translation product. Each of these secretory forms is believed to have one or more of its own receptors that mediates the normal paracrine, autocrine and endocrine actions.

It localises to the secreted. The protein resides in the cytoplasm. The protein localises to the nucleus. Its function is as follows. Neuroendocrine peptide which is a critical regulator of cellular and organ growth, development, migration, differentiation and survival and of epithelial calcium ion transport. Acts by binding to its receptor, PTH1R, activating G protein-coupled receptor signaling. Regulates endochondral bone development and epithelial-mesenchymal interactions during the formation of the mammary glands and teeth. Required for skeletal homeostasis. Promotes mammary mesenchyme differentiation and bud outgrowth by modulating mesenchymal cell responsiveness to BMPs. Up-regulates BMPR1A expression in the mammary mesenchyme and this increases the sensitivity of these cells to BMPs and allows them to respond to BMP4 in a paracrine and/or autocrine fashion. BMP4 signaling in the mesenchyme, in turn, triggers epithelial outgrowth and augments MSX2 expression, which causes the mammary mesenchyme to inhibit hair follicle formation within the nipple sheath. Functionally, potent inhibitor of osteoclastic bone resorption. The chain is Parathyroid hormone-related protein (PTHLH) from Canis lupus familiaris (Dog).